Here is a 326-residue protein sequence, read N- to C-terminus: Pyruvate dehydrogenase E1 component subunit beta (326 aa).

Glutamate 59 contributes to the thiamine diphosphate binding site.

Heterodimer of an alpha and a beta chain. It depends on thiamine diphosphate as a cofactor.

The catalysed reaction is N(6)-[(R)-lipoyl]-L-lysyl-[protein] + pyruvate + H(+) = N(6)-[(R)-S(8)-acetyldihydrolipoyl]-L-lysyl-[protein] + CO2. Its function is as follows. The pyruvate dehydrogenase complex catalyzes the overall conversion of pyruvate to acetyl-CoA and CO(2). It contains multiple copies of three enzymatic components: pyruvate dehydrogenase (E1), dihydrolipoamide acetyltransferase (E2) and lipoamide dehydrogenase (E3). In Rickettsia felis (strain ATCC VR-1525 / URRWXCal2) (Rickettsia azadi), this protein is Pyruvate dehydrogenase E1 component subunit beta (pdhB).